A 645-amino-acid chain; its full sequence is Putative palmitoyltransferase ZDHHC13 (645 aa).

Residues 1–73 (MDWSEGDGSH…KSSHPEDSSS (73 aa)) form a disordered region. The Cytoplasmic segment spans residues 1 to 314 (MDWSEGDGSH…ACLKLLNRYK (314 aa)). Over residues 7–20 (DGSHSHGHMGDSCH) the composition is skewed to basic and acidic residues. The segment covering 23–33 (GGGHSHGHGHS) has biased composition (basic residues). The segment covering 34–43 (HGGSGFGGFM) has biased composition (gly residues). ANK repeat units lie at residues 104–133 (ENVTLLHWAAINNRADIVKYYISKGAVIDQ), 138–167 (LNSTPLHWAIRQGHLSMVIQLMRYGADPSL), 171–200 (EGYRGLHLAVLFQNMPIAAYLMAKGQEVDL), 204–234 (NGQTPLMLAAQKIIGPEPTNFLIKCNASVNA), and 239–268 (NRNSPLHCAVLAGNVDSVHILLEAGASVDM). The helical transmembrane segment at 315-335 (VCLQSVFSVVVVGAFGAILDM) threads the bilayer. Residue Arg336 is a topological domain, lumenal. Residues 337-357 (TESWLLKGILLACIMAVINLA) form a helical membrane-spanning segment. The Cytoplasmic portion of the chain corresponds to 358 to 369 (SRQLATVAVRSL). Residues 370–390 (IPSTGLIASVFWMVVTWVLWF) form a helical membrane-spanning segment. Residues 391–394 (LPDE) lie on the Lumenal side of the membrane. The chain crosses the membrane as a helical span at residues 395-415 (PSAAVQMLFTVNITAVLYYYI). The Cytoplasmic segment spans residues 416–492 (RSCRTDPGHV…NGCIGARNHP (77 aa)). A DHHC domain is found at 449 to 499 (IFCTSCMMRKPMRANHCFSCNACVAKQDHHSIWINGCIGARNHPFFVLFLV). The chain crosses the membrane as a helical span at residues 493–513 (FFVLFLVALNFLCIWMFYGSI). Residues 514 to 542 (TYWSRHCPLHYSEEGIWGALTALMGCSPW) lie on the Lumenal side of the membrane. Residues 543–563 (LLYVFCFVFFHTTWASILLVL) form a helical membrane-spanning segment. Over 564–645 (QLYQIAFLGL…RDMFSSPDAV (82 aa)) the chain is Cytoplasmic.

The protein belongs to the DHHC palmitoyltransferase family. AKR/ZDHHC17 subfamily.

The protein localises to the golgi apparatus membrane. It localises to the cytoplasmic vesicle membrane. Putative palmitoyltransferase that could catalyze the addition of palmitate onto various protein substrates. The chain is Putative palmitoyltransferase ZDHHC13 from Danio rerio (Zebrafish).